A 270-amino-acid polypeptide reads, in one-letter code: Tetraspanin-18 (270 aa).

Residues 1 to 15 (MRRNCCHVSFASTLK) are Cytoplasmic-facing. A helical membrane pass occupies residues 16 to 36 (ILNFVQAFIGVSIIIYSIWML). The Extracellular segment spans residues 37 to 99 (HEYSRHLPVD…LRSLDLPAPW (63 aa)). A helical membrane pass occupies residues 100 to 120 (FIYSFMAVGILVCIVTFIGFI). Over 121–132 (AAEAINGCCLCF) the chain is Cytoplasmic. A helical membrane pass occupies residues 133–153 (YSILKTLLILLEAALVAYIAI). Residues 154–183 (DRHWEKDLPYDPTGELSSLRAFIEENIDIC) are Extracellular-facing. Residues 184-204 (KWVGIAVVAVQLLSLLLAMVL) traverse the membrane as a helical segment. Residues 205-270 (RAMVSTPKPE…NQSPPVNPKG (66 aa)) lie on the Cytoplasmic side of the membrane. Residues 212–249 (KPELDEEEDDENPRSRTWDPLLGPQGNQAPAGSSKIEN) are disordered. Positions 236–249 (QGNQAPAGSSKIEN) are enriched in polar residues. Ser245 carries the post-translational modification Phosphoserine.

This sequence belongs to the tetraspanin (TM4SF) family. In terms of assembly, homodimer. Constituent of tobamovirus replication complex. Expressed in rosette leaves.

The protein resides in the membrane. Its subcellular location is the vacuole membrane. Its function is as follows. May be involved in the regulation of cell differentiation. Promotes intracellular multiplication of tobamoviruses, probably being a component of the replication complex. This chain is Tetraspanin-18 (TOM2AH2), found in Arabidopsis thaliana (Mouse-ear cress).